A 149-amino-acid polypeptide reads, in one-letter code: MLAKATLAIVLSAASLPVLAAQCEATIESNDAMQYNLKEMVVDKSCKQFTVHLKHVGKMAKVAMGHNWVLTKEADKQGVATDGMNAGLAQDYVKAGDTRVIAHTKVIGGGESDSVTFDVSKLTPGEAYAYFCSFPGHWAMMKGTLKLSN.

The first 20 residues, 1-20, serve as a signal peptide directing secretion; sequence MLAKATLAIVLSAASLPVLA. Residues 21–149 form the Plastocyanin-like domain; the sequence is AQCEATIESN…MMKGTLKLSN (129 aa). Cysteines 23 and 46 form a disulfide. The Cu cation site is built by His66, Cys132, His137, and Met141.

The protein localises to the periplasm. Its function is as follows. Transfers electrons from cytochrome c551 to cytochrome oxidase. This is Azurin (azu) from Achromobacter denitrificans (Alcaligenes denitrificans).